We begin with the raw amino-acid sequence, 110 residues long: Large ribosomal subunit protein uL22 (110 aa).

Belongs to the universal ribosomal protein uL22 family. In terms of assembly, part of the 50S ribosomal subunit.

In terms of biological role, this protein binds specifically to 23S rRNA; its binding is stimulated by other ribosomal proteins, e.g. L4, L17, and L20. It is important during the early stages of 50S assembly. It makes multiple contacts with different domains of the 23S rRNA in the assembled 50S subunit and ribosome. Its function is as follows. The globular domain of the protein is located near the polypeptide exit tunnel on the outside of the subunit, while an extended beta-hairpin is found that lines the wall of the exit tunnel in the center of the 70S ribosome. The protein is Large ribosomal subunit protein uL22 of Acinetobacter baumannii (strain ACICU).